A 227-amino-acid polypeptide reads, in one-letter code: Cytochrome c oxidase subunit 2 (227 aa).

Residues 1 to 14 (MAYPFQLGLQDATS) are Mitochondrial intermembrane-facing. Residues 15–45 (PIMEELLHFHDHTLMIVFLISSLVLYIISSM) traverse the membrane as a helical segment. The Mitochondrial matrix segment spans residues 46–59 (LTTKLTHTSTMDAQ). The chain crosses the membrane as a helical span at residues 60-87 (EVETVWTILPAIILVLIALPSLRILYMM). Topologically, residues 88-227 (DEINNPSLTV…YFETWSALML (140 aa)) are mitochondrial intermembrane. Residues His-161, Cys-196, Glu-198, Cys-200, His-204, and Met-207 each coordinate Cu cation. Residue Glu-198 coordinates Mg(2+). Tyr-218 carries the phosphotyrosine modification.

Belongs to the cytochrome c oxidase subunit 2 family. As to quaternary structure, component of the cytochrome c oxidase (complex IV, CIV), a multisubunit enzyme composed of 14 subunits. The complex is composed of a catalytic core of 3 subunits MT-CO1, MT-CO2 and MT-CO3, encoded in the mitochondrial DNA, and 11 supernumerary subunits COX4I, COX5A, COX5B, COX6A, COX6B, COX6C, COX7A, COX7B, COX7C, COX8 and NDUFA4, which are encoded in the nuclear genome. The complex exists as a monomer or a dimer and forms supercomplexes (SCs) in the inner mitochondrial membrane with NADH-ubiquinone oxidoreductase (complex I, CI) and ubiquinol-cytochrome c oxidoreductase (cytochrome b-c1 complex, complex III, CIII), resulting in different assemblies (supercomplex SCI(1)III(2)IV(1) and megacomplex MCI(2)III(2)IV(2)). Found in a complex with TMEM177, COA6, COX18, COX20, SCO1 and SCO2. Interacts with TMEM177 in a COX20-dependent manner. Interacts with COX20. Interacts with COX16. Cu cation serves as cofactor.

Its subcellular location is the mitochondrion inner membrane. The catalysed reaction is 4 Fe(II)-[cytochrome c] + O2 + 8 H(+)(in) = 4 Fe(III)-[cytochrome c] + 2 H2O + 4 H(+)(out). Its function is as follows. Component of the cytochrome c oxidase, the last enzyme in the mitochondrial electron transport chain which drives oxidative phosphorylation. The respiratory chain contains 3 multisubunit complexes succinate dehydrogenase (complex II, CII), ubiquinol-cytochrome c oxidoreductase (cytochrome b-c1 complex, complex III, CIII) and cytochrome c oxidase (complex IV, CIV), that cooperate to transfer electrons derived from NADH and succinate to molecular oxygen, creating an electrochemical gradient over the inner membrane that drives transmembrane transport and the ATP synthase. Cytochrome c oxidase is the component of the respiratory chain that catalyzes the reduction of oxygen to water. Electrons originating from reduced cytochrome c in the intermembrane space (IMS) are transferred via the dinuclear copper A center (CU(A)) of subunit 2 and heme A of subunit 1 to the active site in subunit 1, a binuclear center (BNC) formed by heme A3 and copper B (CU(B)). The BNC reduces molecular oxygen to 2 water molecules using 4 electrons from cytochrome c in the IMS and 4 protons from the mitochondrial matrix. The sequence is that of Cytochrome c oxidase subunit 2 (MT-CO2) from Speothos venaticus (Bush dog).